Here is a 49-residue protein sequence, read N- to C-terminus: Large ribosomal subunit protein bL33B (49 aa).

This sequence belongs to the bacterial ribosomal protein bL33 family.

This Bacillus pumilus (strain SAFR-032) protein is Large ribosomal subunit protein bL33B.